A 380-amino-acid chain; its full sequence is Cytochrome b (380 aa).

The next 4 helical transmembrane spans lie at 34–54, 78–99, 114–134, and 179–199; these read FGSL…LLAM, WLIR…YLHI, WNTG…GYVL, and FFAL…IHLT. Heme b is bound by residues His-84 and His-98. The heme b site is built by His-183 and His-197. Residue His-202 coordinates a ubiquinone. Helical transmembrane passes span 227-247, 289-309, 321-341, and 348-368; these read LKDA…ALFS, LGGV…PLLH, LSQL…WVGS, and FIII…ILFP.

Belongs to the cytochrome b family. As to quaternary structure, the cytochrome bc1 complex contains 11 subunits: 3 respiratory subunits (MT-CYB, CYC1 and UQCRFS1), 2 core proteins (UQCRC1 and UQCRC2) and 6 low-molecular weight proteins (UQCRH/QCR6, UQCRB/QCR7, UQCRQ/QCR8, UQCR10/QCR9, UQCR11/QCR10 and a cleavage product of UQCRFS1). This cytochrome bc1 complex then forms a dimer. It depends on heme b as a cofactor.

It localises to the mitochondrion inner membrane. Its function is as follows. Component of the ubiquinol-cytochrome c reductase complex (complex III or cytochrome b-c1 complex) that is part of the mitochondrial respiratory chain. The b-c1 complex mediates electron transfer from ubiquinol to cytochrome c. Contributes to the generation of a proton gradient across the mitochondrial membrane that is then used for ATP synthesis. In Oceanites oceanicus (Wilson's storm petrel), this protein is Cytochrome b (MT-CYB).